Here is a 191-residue protein sequence, read N- to C-terminus: UPF0312 protein SO_3370 (191 aa).

The first 22 residues, 1 to 22, serve as a signal peptide directing secretion; sequence MKKQLFSALIGASLFAPMAVSA.

The protein belongs to the UPF0312 family. Type 1 subfamily.

It is found in the periplasm. In Shewanella oneidensis (strain ATCC 700550 / JCM 31522 / CIP 106686 / LMG 19005 / NCIMB 14063 / MR-1), this protein is UPF0312 protein SO_3370.